The primary structure comprises 576 residues: Sulfite reductase [NADPH] hemoprotein beta-component (576 aa).

Positions 439, 445, 485, and 489 each coordinate [4Fe-4S] cluster. C489 contributes to the siroheme binding site.

The protein belongs to the nitrite and sulfite reductase 4Fe-4S domain family. Alpha(8)-beta(8). The alpha component is a flavoprotein, the beta component is a hemoprotein. Requires siroheme as cofactor. It depends on [4Fe-4S] cluster as a cofactor.

The enzyme catalyses hydrogen sulfide + 3 NADP(+) + 3 H2O = sulfite + 3 NADPH + 4 H(+). The protein operates within sulfur metabolism; hydrogen sulfide biosynthesis; hydrogen sulfide from sulfite (NADPH route): step 1/1. In terms of biological role, component of the sulfite reductase complex that catalyzes the 6-electron reduction of sulfite to sulfide. This is one of several activities required for the biosynthesis of L-cysteine from sulfate. This Aliivibrio fischeri (strain ATCC 700601 / ES114) (Vibrio fischeri) protein is Sulfite reductase [NADPH] hemoprotein beta-component.